We begin with the raw amino-acid sequence, 266 residues long: Luciferase (266 aa).

Residues 22–41 (GLATACCAVAVASAIAFPYI) form a helical membrane-spanning segment.

It belongs to the fungal luciferase family.

It is found in the membrane. It catalyses the reaction 3-hydroxyhispidin + O2 = (E)-caffeoylpyruvate + hnu + CO2. The enzyme catalyses 3-hydroxyhispidin + O2 = 4-[(E)-2-(3,4-dihydroxyphenyl)ethenyl]-1,7-dihydroxy-2,3,5-trioxabicyclo[2.2.2]oct-7-en-6-one. Functionally, luciferase; part of the gene cluster that mediates the fungal bioluminescence cycle. Uses the fungal luciferin 3-hydroxyhispidin as a substrate to produce an endoperoxide as a high-energy intermediate with decomposition that yields oxyluciferin (also known as caffeoylpyruvate) and light emission. The fungal bioluminescence cycle begins with the hispidin synthetase that catalyzes the formation of hispidin which is further hydroxylated by the hispidin-3-hydroxylase, yielding the fungal luciferin 3-hydroxyhispidin. The luciferase then produces an endoperoxide as a high-energy intermediate with decomposition that yields oxyluciferin and light emission. Oxyluciferin can be recycled to caffeic acid by caffeoylpyruvate hydrolase. This is Luciferase from Armillaria ostoyae (Armillaria root rot fungus).